The chain runs to 674 residues: Translation factor GUF1, mitochondrial (674 aa).

The transit peptide at 1 to 33 (MLRPWFCFRSCVSLLSNRRQYGFRYLATAEPSK) directs the protein to the mitochondrion. Positions 32 to 51 (SKSEKPAKPVKPAKPMSVQE) are disordered. The region spanning 75 to 257 (QNYRNFSIVA…SIIKNIPAPV (183 aa)) is the tr-type G domain. GTP-binding positions include 84-91 (AHVDHGKS), 150-154 (DTPGH), and 204-207 (NKID).

The protein belongs to the TRAFAC class translation factor GTPase superfamily. Classic translation factor GTPase family. LepA subfamily.

Its subcellular location is the mitochondrion inner membrane. The enzyme catalyses GTP + H2O = GDP + phosphate + H(+). Functionally, promotes mitochondrial protein synthesis. May act as a fidelity factor of the translation reaction, by catalyzing a one-codon backward translocation of tRNAs on improperly translocated ribosomes. Binds to mitochondrial ribosomes in a GTP-dependent manner. The protein is Translation factor GUF1, mitochondrial of Lodderomyces elongisporus (strain ATCC 11503 / CBS 2605 / JCM 1781 / NBRC 1676 / NRRL YB-4239) (Yeast).